A 469-amino-acid chain; its full sequence is MNSENALLQSDILAYLEQHEQKDMLRFLTCGSVDDGKSTLIGRLLHDSKMIYEDQLAAITKDSKKSGTTGDKVDLALLVDGLASEREQGITIDVAYRYFSTDKRKFIIADTPGHEQYTRNMVTGASTCDLAIILVDARAGVKTQTRRHSFLVSLLGIKHVIVAINKMDLMEFSEEVYENIKKDYLVFSEQLDIPDIQFVPISALDGDNVVNKSENTPWFEGSTLMKTLENIEIGNDANIDDFRFPVQYVNRPNLNFRGFAGTVVSGQIKKGDKITALPSGKQSTVRSIVGFEGEQEVAYTPLTTTITLEDEIDISRGDMIVKSDNLPLQSSAYEVNLVWMDETPLMPNKQYGFKFATKFVPGSVTDIEHQIDVNTMEHKEAVRLNLNEIGVGKIKLTQSVACDPYTKNRETGAFIIIDRLTNSTVGAGMVIDAIQDSGTKTEYSEFELEFNTLVRKHFPHWNATDITKL.

The tr-type G domain maps to 22–236; it reads KDMLRFLTCG…TLENIEIGND (215 aa). Residues 31–38 are G1; that stretch reads GSVDDGKS. 31 to 38 contacts GTP; that stretch reads GSVDDGKS. A G2 region spans residues 89–93; it reads GITID. Positions 110 to 113 are G3; the sequence is DTPG. Residues 110-114 and 165-168 each bind GTP; these read DTPGH and NKMD. The interval 165–168 is G4; sequence NKMD. The tract at residues 202–204 is G5; that stretch reads SAL.

Belongs to the TRAFAC class translation factor GTPase superfamily. Classic translation factor GTPase family. CysN/NodQ subfamily. Heterodimer composed of CysD, the smaller subunit, and CysN.

The catalysed reaction is sulfate + ATP + H(+) = adenosine 5'-phosphosulfate + diphosphate. It participates in sulfur metabolism; hydrogen sulfide biosynthesis; sulfite from sulfate: step 1/3. Its function is as follows. With CysD forms the ATP sulfurylase (ATPS) that catalyzes the adenylation of sulfate producing adenosine 5'-phosphosulfate (APS) and diphosphate, the first enzymatic step in sulfur assimilation pathway. APS synthesis involves the formation of a high-energy phosphoric-sulfuric acid anhydride bond driven by GTP hydrolysis by CysN coupled to ATP hydrolysis by CysD. The sequence is that of Sulfate adenylyltransferase subunit 1 from Pseudoalteromonas atlantica (strain T6c / ATCC BAA-1087).